Consider the following 83-residue polypeptide: Translation initiation factor IF-1 (83 aa).

Residues methionine 1–leucine 72 form the S1-like domain.

Belongs to the IF-1 family. As to quaternary structure, component of the 30S ribosomal translation pre-initiation complex which assembles on the 30S ribosome in the order IF-2 and IF-3, IF-1 and N-formylmethionyl-tRNA(fMet); mRNA recruitment can occur at any time during PIC assembly.

The protein localises to the cytoplasm. Its function is as follows. One of the essential components for the initiation of protein synthesis. Stabilizes the binding of IF-2 and IF-3 on the 30S subunit to which N-formylmethionyl-tRNA(fMet) subsequently binds. Helps modulate mRNA selection, yielding the 30S pre-initiation complex (PIC). Upon addition of the 50S ribosomal subunit IF-1, IF-2 and IF-3 are released leaving the mature 70S translation initiation complex. The chain is Translation initiation factor IF-1 from Verminephrobacter eiseniae (strain EF01-2).